The following is a 128-amino-acid chain: MRHRKSGRQLNRNSSHRQAMFRNMAGSLVRHEIIKTTLPKAKELRRVVEPLITLAKTDSVANRRLAFARTRDNEIVAKLFNELGPRFASRAGGYTRILKCGFRAGDNAPMAYIELVDRPEAQAEAVAE.

It belongs to the bacterial ribosomal protein bL17 family. Part of the 50S ribosomal subunit. Contacts protein L32.

The chain is Large ribosomal subunit protein bL17 from Erwinia tasmaniensis (strain DSM 17950 / CFBP 7177 / CIP 109463 / NCPPB 4357 / Et1/99).